We begin with the raw amino-acid sequence, 132 residues long: Rubredoxin-1 (132 aa).

The region spanning 1–53 (MSRYQCPDCQYIYDENKGEPHEGFHPNTSWNDIPKDWACPDCAVRDKVDFIFL) is the Rubredoxin-like domain. Fe cation contacts are provided by Cys-6, Cys-9, Cys-39, and Cys-42. The interval 108-132 (TEVLDQASTPQVVRKSSTRKKMRNK) is disordered. A compositionally biased stretch (polar residues) spans 113–122 (QASTPQVVRK). Positions 123–132 (SSTRKKMRNK) are enriched in basic residues.

It belongs to the rubredoxin family. It depends on Fe(3+) as a cofactor.

Its subcellular location is the cytoplasm. Its pathway is hydrocarbon metabolism; alkane degradation. Not known. Probably involved in an electron transport pathway, but not required for the hydrocarbon hydroxylating system. Seems to be non-functional. The protein is Rubredoxin-1 (alkF) of Ectopseudomonas oleovorans (Pseudomonas oleovorans).